A 31-amino-acid chain; its full sequence is MEALVYVFLLVGTLMVIFFAIFFRDPPRIAK.

Residues 3 to 23 (ALVYVFLLVGTLMVIFFAIFF) form a helical membrane-spanning segment.

This sequence belongs to the PsbT family. As to quaternary structure, PSII is composed of 1 copy each of membrane proteins PsbA, PsbB, PsbC, PsbD, PsbE, PsbF, PsbH, PsbI, PsbJ, PsbK, PsbL, PsbM, PsbT, PsbX, PsbY, PsbZ, Psb30/Ycf12, at least 3 peripheral proteins of the oxygen-evolving complex and a large number of cofactors. It forms dimeric complexes.

The protein localises to the plastid. It is found in the chloroplast thylakoid membrane. In terms of biological role, found at the monomer-monomer interface of the photosystem II (PS II) dimer, plays a role in assembly and dimerization of PSII. PSII is a light-driven water plastoquinone oxidoreductase, using light energy to abstract electrons from H(2)O, generating a proton gradient subsequently used for ATP formation. This is Photosystem II reaction center protein T from Gracilaria tenuistipitata var. liui (Red alga).